The sequence spans 353 residues: Pleckstrin-2 (353 aa).

Position 1 is an N-acetylmethionine (methionine 1). The PH 1 domain maps to 4-104 (GVLKEGFLVK…WAFEITGAIH (101 aa)). Serine 120 is modified (phosphoserine). One can recognise a DEP domain in the interval 139-225 (TSTGIRPSPN…DSTALYTFAE (87 aa)). In terms of domain architecture, PH 2 spans 247–353 (TVVKQGYLSK…EWIEAIKKLT (107 aa)).

As to expression, ubiquitous. Most abundant in the thymus, large bowel, small bowel, stomach, and prostate.

It localises to the cell projection. The protein localises to the lamellipodium membrane. It is found in the cytoplasm. The protein resides in the cytoskeleton. Its function is as follows. May help orchestrate cytoskeletal arrangement. Contribute to lamellipodia formation. Overexpression of pleckstrin 2 causes large lamellipodia and peripheral ruffle formation. This is Pleckstrin-2 (Plek2) from Mus musculus (Mouse).